Here is a 115-residue protein sequence, read N- to C-terminus: Non-specific lipid-transfer protein Cor a 8.0101 (115 aa).

Residues 1–23 form the signal peptide; that stretch reads MGSLKLVCAVLLCMMVAAPVARA. Disulfide bonds link C27-C74, C37-C51, C52-C97, and C72-C111.

It belongs to the plant LTP family. In terms of assembly, monomer. Expressed in seed (at protein level). Expressed in seed.

In terms of biological role, plant non-specific lipid-transfer proteins transfer phospholipids as well as galactolipids across membranes. May play a role in wax or cutin deposition in the cell walls of expanding epidermal cells and certain secretory tissues. The polypeptide is Non-specific lipid-transfer protein Cor a 8.0101 (Corylus avellana (European hazel)).